Consider the following 120-residue polypeptide: Large ribosomal subunit protein uL18 (120 aa).

Belongs to the universal ribosomal protein uL18 family. As to quaternary structure, part of the 50S ribosomal subunit; part of the 5S rRNA/L5/L18/L25 subcomplex. Contacts the 5S and 23S rRNAs.

Its function is as follows. This is one of the proteins that bind and probably mediate the attachment of the 5S RNA into the large ribosomal subunit, where it forms part of the central protuberance. The protein is Large ribosomal subunit protein uL18 of Treponema denticola (strain ATCC 35405 / DSM 14222 / CIP 103919 / JCM 8153 / KCTC 15104).